A 219-amino-acid polypeptide reads, in one-letter code: Phosphatidylserine decarboxylase proenzyme (219 aa).

S182 functions as the Schiff-base intermediate with substrate; via pyruvic acid in the catalytic mechanism. Position 182 is a pyruvic acid (Ser); by autocatalysis (S182).

This sequence belongs to the phosphatidylserine decarboxylase family. PSD-A subfamily. Heterodimer of a large membrane-associated beta subunit and a small pyruvoyl-containing alpha subunit. Pyruvate serves as cofactor. Post-translationally, is synthesized initially as an inactive proenzyme. Formation of the active enzyme involves a self-maturation process in which the active site pyruvoyl group is generated from an internal serine residue via an autocatalytic post-translational modification. Two non-identical subunits are generated from the proenzyme in this reaction, and the pyruvate is formed at the N-terminus of the alpha chain, which is derived from the carboxyl end of the proenzyme. The post-translation cleavage follows an unusual pathway, termed non-hydrolytic serinolysis, in which the side chain hydroxyl group of the serine supplies its oxygen atom to form the C-terminus of the beta chain, while the remainder of the serine residue undergoes an oxidative deamination to produce ammonia and the pyruvoyl prosthetic group on the alpha chain.

The protein localises to the cell membrane. The enzyme catalyses a 1,2-diacyl-sn-glycero-3-phospho-L-serine + H(+) = a 1,2-diacyl-sn-glycero-3-phosphoethanolamine + CO2. It participates in phospholipid metabolism; phosphatidylethanolamine biosynthesis; phosphatidylethanolamine from CDP-diacylglycerol: step 2/2. In terms of biological role, catalyzes the formation of phosphatidylethanolamine (PtdEtn) from phosphatidylserine (PtdSer). This Chlorobium phaeovibrioides (strain DSM 265 / 1930) (Prosthecochloris vibrioformis (strain DSM 265)) protein is Phosphatidylserine decarboxylase proenzyme.